Reading from the N-terminus, the 277-residue chain is Isoprenyl transferase 1 (277 aa).

Positions 1 to 30 are disordered; the sequence is MAVRGILGRQRREYRTPEPHPSGARPPKLG. Asp-42 is a catalytic residue. Residue Asp-42 participates in Mg(2+) binding. Residues 43 to 46, Trp-47, Arg-55, His-59, and 87 to 89 each bind substrate; these read GNGR and STE. Asn-90 (proton acceptor) is an active-site residue. Substrate-binding positions include Trp-91, Arg-93, Arg-210, and 216–218; that span reads RTS. Residue Glu-229 participates in Mg(2+) binding.

The protein belongs to the UPP synthase family. Homodimer. Requires Mg(2+) as cofactor.

Functionally, catalyzes the condensation of isopentenyl diphosphate (IPP) with allylic pyrophosphates generating different type of terpenoids. The polypeptide is Isoprenyl transferase 1 (Streptomyces coelicolor (strain ATCC BAA-471 / A3(2) / M145)).